Reading from the N-terminus, the 209-residue chain is Imidazole glycerol phosphate synthase subunit HisH (209 aa).

The Glutamine amidotransferase type-1 domain occupies 1-205 (MIAIIDYGMG…KGVVETWKSS (205 aa)). The Nucleophile role is filled by C79. Active-site residues include H180 and E182.

As to quaternary structure, heterodimer of HisH and HisF.

It is found in the cytoplasm. It catalyses the reaction 5-[(5-phospho-1-deoxy-D-ribulos-1-ylimino)methylamino]-1-(5-phospho-beta-D-ribosyl)imidazole-4-carboxamide + L-glutamine = D-erythro-1-(imidazol-4-yl)glycerol 3-phosphate + 5-amino-1-(5-phospho-beta-D-ribosyl)imidazole-4-carboxamide + L-glutamate + H(+). It carries out the reaction L-glutamine + H2O = L-glutamate + NH4(+). The protein operates within amino-acid biosynthesis; L-histidine biosynthesis; L-histidine from 5-phospho-alpha-D-ribose 1-diphosphate: step 5/9. Functionally, IGPS catalyzes the conversion of PRFAR and glutamine to IGP, AICAR and glutamate. The HisH subunit catalyzes the hydrolysis of glutamine to glutamate and ammonia as part of the synthesis of IGP and AICAR. The resulting ammonia molecule is channeled to the active site of HisF. The chain is Imidazole glycerol phosphate synthase subunit HisH from Bacillus thuringiensis (strain Al Hakam).